The chain runs to 36 residues: Fructose-1,6-/sedoheptulose-1,7-bisphosphate aldolase (36 aa).

The protein is Fructose-1,6-/sedoheptulose-1,7-bisphosphate aldolase (cbbA) of Nitrobacter vulgaris.